An 823-amino-acid polypeptide reads, in one-letter code: Protein phosphatase 1 regulatory subunit 29 (823 aa).

A signal peptide spans 1 to 22; sequence MLRLGLCAAALLCVCQPGAVRA. At 23–397 the chain is on the extracellular side; that stretch reads DCWLIEGDKG…APSTSTTTHY (375 aa). Asn54 carries N-linked (GlcNAc...) asparagine glycosylation. 5 LRR repeats span residues 56-77, 80-101, 104-125, 128-149, and 152-173; these read TVHDLRLNENKLKAVLYSSLNR, NLTDLNLTKNEISYIEDGAFLG, SLQVLQLGYNRLSNLTEGMLRG, RLQFLFVQHNLIEVVTPTAFSE, and SLISIDLSSNRLSRLDGATFAS. Asn80, Asn85, and Asn117 each carry an N-linked (GlcNAc...) asparagine glycan. The LRRCT domain maps to 185–247; sequence NPFNCECDLF…ITVLQAKCRN (63 aa). 2 N-linked (GlcNAc...) asparagine glycosylation sites follow: Asn205 and Asn247. The interval 249–294 is disordered; it reads SMPARPVSHPTPYSTDAQREPDENSGFNPDEILSVEPPASSTTDAS. The Fibronectin type-III domain occupies 292-379; it reads DASAGPAIKL…FNHTCLTFTT (88 aa). The chain crosses the membrane as a helical span at residues 398–418; sequence IMTILGCLFGMVIVLGAVYYC. The Cytoplasmic portion of the chain corresponds to 419–823; that stretch reads LRKRRMQEEK…WKGVSAQQKL (405 aa). Positions 590 to 624 are disordered; it reads ASSAATPGALERPSFLSPPYKESSHHPLQRQLSAD. Phosphoserine occurs at positions 622, 671, and 675.

Interacts with PPP1CA.

It is found in the membrane. Its function is as follows. Inhibits phosphatase activity of protein phosphatase 1 (PP1) complexes. The sequence is that of Protein phosphatase 1 regulatory subunit 29 (Elfn2) from Mus musculus (Mouse).